Consider the following 102-residue polypeptide: NADH-quinone oxidoreductase subunit K (102 aa).

The next 3 helical transmembrane spans lie at 6-26 (LEHG…GLMV), 30-50 (ILFV…AFIV), and 62-82 (VMFI…LAIL).

It belongs to the complex I subunit 4L family. As to quaternary structure, NDH-1 is composed of 13 different subunits. Subunits NuoA, H, J, K, L, M, N constitute the membrane sector of the complex.

It localises to the cell inner membrane. It catalyses the reaction a quinone + NADH + 5 H(+)(in) = a quinol + NAD(+) + 4 H(+)(out). Functionally, NDH-1 shuttles electrons from NADH, via FMN and iron-sulfur (Fe-S) centers, to quinones in the respiratory chain. The immediate electron acceptor for the enzyme in this species is believed to be ubiquinone. Couples the redox reaction to proton translocation (for every two electrons transferred, four hydrogen ions are translocated across the cytoplasmic membrane), and thus conserves the redox energy in a proton gradient. The polypeptide is NADH-quinone oxidoreductase subunit K (Pseudomonas fluorescens (strain SBW25)).